We begin with the raw amino-acid sequence, 255 residues long: MNIAKIVREAREQSRLTTLDFATGIFDEFIQLHGDRSFRDDGAVVGGIGWLGDQAVTVVGIQKGKSLQDNLKRNFGQPHPEGYRKALRLMKQAEKFGRPVVTFINTAGAYPGVGAEERGQGEAIARNLMEMSDLKVPIIAIIIGEGGSGGALALAVADRVWMLENSIYAILSPEGFASILWKDGTRAMEAAELMKITSHELLEMDVVDKVISEVGLSSKELIKSVKKELQTELARLSQKPLEELLEERYQRFRKY.

The CoA carboxyltransferase C-terminal domain occupies 1–235 (MNIAKIVREA…KKELQTELAR (235 aa)).

This sequence belongs to the AccA family. Acetyl-CoA carboxylase is a heterohexamer composed of biotin carboxyl carrier protein (AccB), biotin carboxylase (AccC) and two subunits each of ACCase subunit alpha (AccA) and ACCase subunit beta (AccD).

Its subcellular location is the cytoplasm. The enzyme catalyses N(6)-carboxybiotinyl-L-lysyl-[protein] + acetyl-CoA = N(6)-biotinyl-L-lysyl-[protein] + malonyl-CoA. It participates in lipid metabolism; malonyl-CoA biosynthesis; malonyl-CoA from acetyl-CoA: step 1/1. In terms of biological role, component of the acetyl coenzyme A carboxylase (ACC) complex. First, biotin carboxylase catalyzes the carboxylation of biotin on its carrier protein (BCCP) and then the CO(2) group is transferred by the carboxyltransferase to acetyl-CoA to form malonyl-CoA. This Streptococcus pneumoniae serotype 2 (strain D39 / NCTC 7466) protein is Acetyl-coenzyme A carboxylase carboxyl transferase subunit alpha.